Reading from the N-terminus, the 417-residue chain is Gamma-glutamyl phosphate reductase (417 aa).

Belongs to the gamma-glutamyl phosphate reductase family.

The protein localises to the cytoplasm. The enzyme catalyses L-glutamate 5-semialdehyde + phosphate + NADP(+) = L-glutamyl 5-phosphate + NADPH + H(+). Its pathway is amino-acid biosynthesis; L-proline biosynthesis; L-glutamate 5-semialdehyde from L-glutamate: step 2/2. Catalyzes the NADPH-dependent reduction of L-glutamate 5-phosphate into L-glutamate 5-semialdehyde and phosphate. The product spontaneously undergoes cyclization to form 1-pyrroline-5-carboxylate. In Escherichia coli (strain 55989 / EAEC), this protein is Gamma-glutamyl phosphate reductase.